The following is a 788-amino-acid chain: Leucine-rich repeat and fibronectin type-III domain-containing protein 2 (788 aa).

A signal peptide spans 1 to 20 (METLLGGLLAFGMAFAVVDA). The LRRNT domain occupies 21 to 52 (CPKYCVCQNLSESLGTLCPSKGLLFVPPDIDR). At 21–534 (CPKYCVCQNL…MHSQILGGTM (514 aa)) the chain is on the extracellular side. The N-linked (GlcNAc...) asparagine glycan is linked to asparagine 29. LRR repeat units follow at residues 53–74 (RTVE…DFAN), 77–98 (GLVD…SFLD), 101–122 (SLRS…TLRG), 125–146 (NLQH…AFED), 150–171 (TLED…SVRR), 174–195 (NLHQ…TFAD), and 198–219 (KLAR…PIFA). Positions 242–288 (NPLHCNCELLWLRRLERDDDLETCGSPGSLKGRYFWHIREEEFVCEP) constitute an LRRCT domain. The 87-residue stretch at 289–375 (PLITQHTHKL…GEATATVEVS (87 aa)) folds into the Ig-like domain. Cysteine 310 and cysteine 359 form a disulfide bridge. 3 N-linked (GlcNAc...) asparagine glycosylation sites follow: asparagine 332, asparagine 341, and asparagine 384. The interval 383-423 (SNSTSRMAPPKSRLSDITGSSKTSRGGGGSGAGEPPKSTPE) is disordered. In terms of domain architecture, Fibronectin type-III spans 422 to 518 (PERAVLVSDV…GCAQFFTKAD (97 aa)). The helical transmembrane segment at 535–555 (ILVIGGIIVATLLVFIVILMV) threads the bilayer. Topologically, residues 556–788 (RYKVCNHDTP…SSEWVMESTV (233 aa)) are cytoplasmic. The span at 620-631 (CDSSSSSSLGSG) shows a compositional bias: low complexity. Disordered stretches follow at residues 620-655 (CDSS…PSLD) and 668-711 (SQRK…RSLL). Residues 642-651 (RLPPPAPRPK) show a composition bias toward pro residues. A PDZ-binding motif is present at residues 785-788 (ESTV).

This sequence belongs to the LRFN family. Forms heteromeric complexes with LRFN1, LRFN3, LRFN4 and LRFN5. Can form homomeric complexes, but not across cell junctions. Interacts with DLG4. Directly interacts with DLG1, DLG2 and DLG3. Directly interacts with 2 NMDA receptor subunits GRIN1 and GRIN2A. Post-translationally, glycosylated. In terms of tissue distribution, predominantly expressed in the brain, with a weak, but broad expression in the cerebral cortex and diencephalic nuclei. Strongly expressed in both the pyramidal layer and the dentate gyrus of the hippocampus. Also detected in other parts of the central nervous system, including the olfactory bulb, pons, cerebellum, and medulla oblongata, as well as in the peripheral nervous system, such as the ganglia of cranial nerves and the dorsal root ganglion during gestation.

It localises to the membrane. It is found in the synapse. The protein resides in the postsynaptic cell membrane. Its function is as follows. Promotes neurite outgrowth in hippocampal neurons. Enhances the cell surface expression of 2 NMDA receptor subunits GRIN1 and GRIN2A. May play a role in redistributing DLG4 to the cell periphery. The protein is Leucine-rich repeat and fibronectin type-III domain-containing protein 2 (Lrfn2) of Mus musculus (Mouse).